The chain runs to 528 residues: Phosphoenolpyruvate carboxykinase (ATP) (528 aa).

The substrate site is built by Arg56, Tyr192, and Lys198. ATP contacts are provided by residues Lys198, His217, and 233-241 (GLSGTGKTT). Mn(2+) contacts are provided by Lys198 and His217. Mn(2+) is bound at residue Asp254. Glu282, Arg319, and Thr444 together coordinate ATP. Substrate is bound at residue Arg319.

This sequence belongs to the phosphoenolpyruvate carboxykinase (ATP) family. The cofactor is Mn(2+).

The protein resides in the cytoplasm. It carries out the reaction oxaloacetate + ATP = phosphoenolpyruvate + ADP + CO2. It participates in carbohydrate biosynthesis; gluconeogenesis. Involved in the gluconeogenesis. Catalyzes the conversion of oxaloacetate (OAA) to phosphoenolpyruvate (PEP) through direct phosphoryl transfer between the nucleoside triphosphate and OAA. The chain is Phosphoenolpyruvate carboxykinase (ATP) from Bacillus pumilus (strain SAFR-032).